A 103-amino-acid chain; its full sequence is Large ribosomal subunit protein bL21 (103 aa).

The protein belongs to the bacterial ribosomal protein bL21 family. As to quaternary structure, part of the 50S ribosomal subunit. Contacts protein L20.

This protein binds to 23S rRNA in the presence of protein L20. In Methylococcus capsulatus (strain ATCC 33009 / NCIMB 11132 / Bath), this protein is Large ribosomal subunit protein bL21.